Here is a 78-residue protein sequence, read N- to C-terminus: Large ribosomal subunit protein bL28 (78 aa).

The segment at 1–28 is disordered; the sequence is MSAYCQVTGRKPGFGKQVSHSHRHTSRR.

Belongs to the bacterial ribosomal protein bL28 family.

The chain is Large ribosomal subunit protein bL28 from Corynebacterium urealyticum (strain ATCC 43042 / DSM 7109).